The primary structure comprises 131 residues: Small ribosomal subunit protein uS11 (131 aa).

It belongs to the universal ribosomal protein uS11 family. As to quaternary structure, part of the 30S ribosomal subunit. Interacts with proteins S7 and S18. Binds to IF-3.

In terms of biological role, located on the platform of the 30S subunit, it bridges several disparate RNA helices of the 16S rRNA. Forms part of the Shine-Dalgarno cleft in the 70S ribosome. The sequence is that of Small ribosomal subunit protein uS11 from Deinococcus radiodurans (strain ATCC 13939 / DSM 20539 / JCM 16871 / CCUG 27074 / LMG 4051 / NBRC 15346 / NCIMB 9279 / VKM B-1422 / R1).